A 239-amino-acid polypeptide reads, in one-letter code: Phosphoribosylaminoimidazole-succinocarboxamide synthase (239 aa).

The protein belongs to the SAICAR synthetase family.

The enzyme catalyses 5-amino-1-(5-phospho-D-ribosyl)imidazole-4-carboxylate + L-aspartate + ATP = (2S)-2-[5-amino-1-(5-phospho-beta-D-ribosyl)imidazole-4-carboxamido]succinate + ADP + phosphate + 2 H(+). The protein operates within purine metabolism; IMP biosynthesis via de novo pathway; 5-amino-1-(5-phospho-D-ribosyl)imidazole-4-carboxamide from 5-amino-1-(5-phospho-D-ribosyl)imidazole-4-carboxylate: step 1/2. This Bacillus cytotoxicus (strain DSM 22905 / CIP 110041 / 391-98 / NVH 391-98) protein is Phosphoribosylaminoimidazole-succinocarboxamide synthase.